The sequence spans 294 residues: Phosphatidylserine decarboxylase proenzyme (294 aa).

Active-site charge relay system; for autoendoproteolytic cleavage activity residues include Asp-100, His-157, and Ser-261. Ser-261 (schiff-base intermediate with substrate; via pyruvic acid; for decarboxylase activity) is an active-site residue. Ser-261 carries the pyruvic acid (Ser); by autocatalysis modification.

Belongs to the phosphatidylserine decarboxylase family. PSD-B subfamily. Prokaryotic type I sub-subfamily. As to quaternary structure, heterodimer of a large membrane-associated beta subunit and a small pyruvoyl-containing alpha subunit. Pyruvate serves as cofactor. Is synthesized initially as an inactive proenzyme. Formation of the active enzyme involves a self-maturation process in which the active site pyruvoyl group is generated from an internal serine residue via an autocatalytic post-translational modification. Two non-identical subunits are generated from the proenzyme in this reaction, and the pyruvate is formed at the N-terminus of the alpha chain, which is derived from the carboxyl end of the proenzyme. The autoendoproteolytic cleavage occurs by a canonical serine protease mechanism, in which the side chain hydroxyl group of the serine supplies its oxygen atom to form the C-terminus of the beta chain, while the remainder of the serine residue undergoes an oxidative deamination to produce ammonia and the pyruvoyl prosthetic group on the alpha chain. During this reaction, the Ser that is part of the protease active site of the proenzyme becomes the pyruvoyl prosthetic group, which constitutes an essential element of the active site of the mature decarboxylase.

It is found in the cell membrane. It carries out the reaction a 1,2-diacyl-sn-glycero-3-phospho-L-serine + H(+) = a 1,2-diacyl-sn-glycero-3-phosphoethanolamine + CO2. Its pathway is phospholipid metabolism; phosphatidylethanolamine biosynthesis; phosphatidylethanolamine from CDP-diacylglycerol: step 2/2. Its function is as follows. Catalyzes the formation of phosphatidylethanolamine (PtdEtn) from phosphatidylserine (PtdSer). This Histophilus somni (strain 2336) (Haemophilus somnus) protein is Phosphatidylserine decarboxylase proenzyme.